Here is a 619-residue protein sequence, read N- to C-terminus: DNA mismatch repair protein MutL (619 aa).

Basic and acidic residues predominate over residues 368 to 378 (VDEPKQVDEPK). The interval 368–403 (VDEPKQVDEPKQSSPVQEPKEEIPSFLPTVESKQND) is disordered.

This sequence belongs to the DNA mismatch repair MutL/HexB family.

Functionally, this protein is involved in the repair of mismatches in DNA. It is required for dam-dependent methyl-directed DNA mismatch repair. May act as a 'molecular matchmaker', a protein that promotes the formation of a stable complex between two or more DNA-binding proteins in an ATP-dependent manner without itself being part of a final effector complex. The sequence is that of DNA mismatch repair protein MutL from Geobacillus sp. (strain WCH70).